Here is a 115-residue protein sequence, read N- to C-terminus: Tyrosine-protein phosphatase 19 (115 aa).

A Tyrosine-protein phosphatase domain is found at 1–115 (WLMIVEQKCR…ETGSDAPMVV (115 aa)). Substrate is bound at residue Asp83.

The protein belongs to the protein-tyrosine phosphatase family.

It carries out the reaction O-phospho-L-tyrosyl-[protein] + H2O = L-tyrosyl-[protein] + phosphate. This is Tyrosine-protein phosphatase 19 (STY-19) from Styela plicata (Wrinkled sea squirt).